Here is a 110-residue protein sequence, read N- to C-terminus: uncharacterized protein (110 aa).

Its subcellular location is the plastid. It is found in the chloroplast. This is an uncharacterized protein from Auxenochlorella pyrenoidosa (Freshwater green alga).